The sequence spans 402 residues: Serine/threonine transporter SstT (402 aa).

The next 9 membrane-spanning stretches (helical) occupy residues 19–39 (IGVVIGLFLGILVPKASAIGL), 43–63 (LFVGGLKAIAPLLVFTLVISA), 86–106 (TFAAALIAVVVNYIFPLTLIL), 138–158 (AITEANYMSILFWAVIFGLAM), 179–199 (VVKWIINLAPIGIMGLVFTSI), 212–232 (LLILVLVGTMLFVALVVNPII), 287–307 (IPLGAAINMAGAAITINILTL), 327–347 (VVAAVSACGASGVTGGSLLLI), and 354–374 (FGISNDVAMQVVGVGFIVGVI).

It belongs to the dicarboxylate/amino acid:cation symporter (DAACS) (TC 2.A.23) family.

It is found in the cell membrane. It catalyses the reaction L-serine(in) + Na(+)(in) = L-serine(out) + Na(+)(out). The catalysed reaction is L-threonine(in) + Na(+)(in) = L-threonine(out) + Na(+)(out). In terms of biological role, involved in the import of serine and threonine into the cell, with the concomitant import of sodium (symport system). The sequence is that of Serine/threonine transporter SstT from Streptococcus agalactiae serotype Ia (strain ATCC 27591 / A909 / CDC SS700).